The following is a 376-amino-acid chain: MGSISQSHKRQPLELQGHLASFKAFDCTPVLGTEFPDAKLAEWLQAPNADDLIRDLAITISQRGVVIFRSQVDLTDELQKTLVQKLGELTGKPSDSTWHIHPLAKYNPTGDSTRHLITTDPKNKPAEDRFRNQAEQPMGVRAAWHTDISYEPNPADYSCLKMVQLPTNGGGKWPQLPILTPVERHGTMANAKCANSIEQSDTLYASSYEVLDKISPAYRKFLETLTATFAQPRYNQSSQEKKSEIHVEPRGSPNNVGSDLSAIHPVVRTNPVTGWKGLYGAGMHTRRFNEVTADESRRLADWLLQMIVENHDLQFRHSWKNPYDVAIWDNRAVFHAGIMDYKGQGHRTGHRYVGVGEQPYLDPESKTRREALGEFN.

Residues H145 and D147 each contribute to the Fe cation site. T202 contacts 2-oxoglutarate. Residues 234 to 260 (YNQSSQEKKSEIHVEPRGSPNNVGSDL) form a disordered region. Basic and acidic residues predominate over residues 239 to 249 (QEKKSEIHVEP). Position 335 (H335) interacts with Fe cation. 2 residues coordinate 2-oxoglutarate: R347 and R351. Residues 354–376 (GVGEQPYLDPESKTRREALGEFN) form a disordered region. The segment covering 363-376 (PESKTRREALGEFN) has biased composition (basic and acidic residues).

Belongs to the TfdA dioxygenase family. Fe(2+) is required as a cofactor.

Functionally, alpha-ketoglutarate-dependent dioxygenas; part of the cluster that mediates the biosynthesis of shearones, diterpenoid pyrones (DPs) which are structurally diverse meroterpenoids consisting of a diterpene linked by a pyrone, and which may exhibit a range of bioactivities. The alpha-ketoglutarate-dependent dioxygenase esdpJ seems not to be involved in this pathway. The molecular scaffold is commonly biosynthesized by a series of enzymes including the non-reducing polyketide synthase (NR-PKS) esdpA that generates an alpha-pyrone; the prenyltransferase esdpC that attaches a geranylgeranyl pyrophosphate (GGPP) produced by the GGPP synthase (GGPPS) esdpD onto the pyrone unit; the FAD-dependent monooxygenase esdpE that converts an olefin on the diterpene unit into an epoxide; and the terpene cyclase esdpB that catalyzes the cyclization reactions to give the molecular backbone shearone A. In the modification steps, esdpF oxidizes the hydroxy group to a ketone at C-3 and esdpG then attaches hydroxy groups at both C-11 and C-12. After that, esdpI hydroxylates at C-20 and esdpH hydroxylates at C-6'. The ether bridge is generated by nucleophilic attack of the hydroxy group at C-20 to the carbonyl carbon at C-3. EsdpH can also functions prior to esdpI. The different combinations of these modification enzymes lead to the production of diverse shearone derivatives, shearone I being the end product of the pathway. The protein is Alpha-ketoglutarate-dependent dioxygenase esdpJ of Penicillium shearii (Eupenicillium shearii).